A 199-amino-acid polypeptide reads, in one-letter code: Large ribosomal subunit protein uL4 (199 aa).

The protein belongs to the universal ribosomal protein uL4 family. Part of the 50S ribosomal subunit.

Its function is as follows. One of the primary rRNA binding proteins, this protein initially binds near the 5'-end of the 23S rRNA. It is important during the early stages of 50S assembly. It makes multiple contacts with different domains of the 23S rRNA in the assembled 50S subunit and ribosome. Functionally, forms part of the polypeptide exit tunnel. In Aquifex pyrophilus, this protein is Large ribosomal subunit protein uL4.